We begin with the raw amino-acid sequence, 337 residues long: Trace amine-associated receptor 5 (337 aa).

Residues 1-38 are Extracellular-facing; the sequence is MRAVLLPGSGEQPTAFCYQVNGSCPRTVHPLAIQVVIY. N21 is a glycosylation site (N-linked (GlcNAc...) asparagine). Disulfide bonds link C24/C188 and C99/C192. A helical transmembrane segment spans residues 39 to 59; the sequence is LACAVGVLITVLGNLFVVFAV. The Cytoplasmic portion of the chain corresponds to 60-70; it reads SYFKVLHTPTN. A helical membrane pass occupies residues 71–91; the sequence is FLLLSLALADMLLGLLVLPLS. Topologically, residues 92 to 109 are extracellular; the sequence is TVRSVESCWFFGDFLCRL. The helical transmembrane segment at 110–130 threads the bilayer; sequence HTYLDTLFCLTSIFHLCFISI. At 131-154 the chain is on the cytoplasmic side; the sequence is DRHCAICDPLLYPSKFTVRTALRY. Residues 155-175 traverse the membrane as a helical segment; the sequence is IVAGWGIPAAYTAFFLYTDVV. The extracellular Loop 2 (ECL2) stretch occupies residues 176–189; it reads ERALSQWLEEMPCV. At 176 to 204 the chain is on the extracellular side; it reads ERALSQWLEEMPCVGSCQLLFNKFWGWLN. The chain crosses the membrane as a helical span at residues 205-225; sequence FPAFFVPCLIMISLYLKIFVV. Topologically, residues 226 to 253 are cytoplasmic; that stretch reads ATRQAQQIRTLSQSLAGAVKRERKAAKT. Residues 254–274 traverse the membrane as a helical segment; the sequence is LGIAVGIYLVCWLPFTVDTLV. Residues 275 to 284 are Extracellular-facing; the sequence is DSLLNFITPP. Residues 285–307 form a helical membrane-spanning segment; the sequence is LVFDIFIWFAYFNSACNPIIYVF. Over 308-337 the chain is Cytoplasmic; it reads SYRWFRKALKLLLSREIFSPRTPTVDLYHD.

Belongs to the G-protein coupled receptor 1 family. As to expression, specifically expressed in neurons of the olfactory epithelium, to discrete glomeruli predominantly localized to a confined bulb region. Present in the dorsal area of the main olfactory epithelium. Also present in the limbic brain areas receiving projection from the olfactory system and involved in the regulation of emotions. Also expressed in some brain regions outside the olfactory epithelium, such as the hippocampus, cerebellum, cortex, raphe nuclei, hypothalamus, and habenula.

It is found in the cell membrane. Inhibited by 1-[(5,5- diphenyloxolan-2-yl)methyl]-4-(2-methoxyphenyl)piperazine and N-[(2,2-diphenyl-1,3-dioxolan-4-yl)methyl]-2-(2- methoxyphenoxy)ethan-1-amine small molecules. Functionally, olfactory receptor specific for trimethylamine, a trace amine enriched in the urine of male mice, playing a role in social behavior. Also activated by N-methylpiperidine. Trimethylamine is present at high concentration in the urine of male mice after puberty and acts as an attractant. Trimethylamine-binding causes a conformation change that triggers signaling via G(s)-class of G alpha proteins (GNAL or GNAS). Also required to provide olfactory input into limbic brain areas to regulate emotional behaviors likely via modulation of the serotonin system. The sequence is that of Trace amine-associated receptor 5 from Mus musculus (Mouse).